The sequence spans 621 residues: MENNGEMNAQPELSVDITKTYMYEKLWNICAGPLCVLPKPGEKVYYFPQGHIELIENSTRDELDHIRPIFDLPSKLRCRVVAIDRKVDKNTDEVYAQISLMPDTTEVMTHNTTMDTRRPIVYFFSKILTASDVSLSGGLIIPKQYAIECFPPLDMSQPISTQNLVAKDLYGQEWSFKHVFRGTPQRHMFTSGGGWSVFATTKRLIVGDIFVLLRGENGELRFGIRRAKHQQGHIPSSVISANCMQHGVIASVVNAFKTKCMFNVVYKPSSSQFVISYDKFVDAMNNNYIVGSRFRMQFEGKDFSEKRYDGTIIGVNDMSPHWKDSEWRSLKVQWDELSPFLRPNQVSPWDIEHLIPSSDISQSSLKKKKHWLQLNEIGATLSNLWTCQEIGQRSMNSPISVPEFSYPNAIEDSKFLSGLLLNHSLLAIPNENYNSDQMIQPRKEDITTEATTSCLLFGVDLTKVSKSKDSICPIESCKKSLPQDKKFDQTQPLRSPKEVQSTEFNFTRSRIKVHMQGVAISRAVDLTAMHGYNQLIQKLEELFDLKDELRTRNQWEIVFTNNEGAEMLVGDDPWPEFCNMAKRIFICSKEEIKKMKLKNKFFQPESKALTSSDVPPNVTDN.

The TF-B3 DNA-binding region spans 124–228 (FSKILTASDV…ELRFGIRRAK (105 aa)). In terms of domain architecture, PB1 spans 508-600 (RSRIKVHMQG…EIKKMKLKNK (93 aa)).

This sequence belongs to the ARF family. In terms of assembly, homodimers and heterodimers.

It is found in the nucleus. Auxin response factors (ARFs) are transcriptional factors that bind specifically to the DNA sequence 5'-TGTCTC-3' found in the auxin-responsive promoter elements (AuxREs). Could act as transcriptional activator or repressor. Formation of heterodimers with Aux/IAA proteins may alter their ability to modulate early auxin response genes expression. This chain is Auxin response factor 13 (ARF13), found in Arabidopsis thaliana (Mouse-ear cress).